Consider the following 494-residue polypeptide: Integrin beta-like protein 1 (494 aa).

A signal peptide spans 1–23 (MHPPGFKNFLLLVSSLFFIGLSA). Cystine bridges form between Cys40–Cys71, Cys51–Cys69, Cys63–Cys74, Cys76–Cys89, Cys91–Cys112, Cys96–Cys110, Cys104–Cys115, Cys117–Cys126, Cys132–Cys159, Cys143–Cys157, Cys151–Cys162, Cys164–Cys178, Cys180–Cys202, Cys185–Cys200, Cys194–Cys205, Cys207–Cys216, Cys220–Cys247, Cys231–Cys245, Cys239–Cys250, Cys252–Cys269, Cys271–Cys296, Cys276–Cys294, Cys288–Cys299, Cys301–Cys310, Cys316–Cys343, Cys327–Cys341, Cys335–Cys346, Cys348–Cys361, Cys363–Cys384, Cys368–Cys382, Cys376–Cys387, Cys389–Cys398, Cys404–Cys431, Cys415–Cys429, Cys423–Cys434, Cys436–Cys448, Cys450–Cys471, Cys455–Cys469, Cys463–Cys474, and Cys476–Cys485. I-EGF domains follow at residues 40–90 (CRLS…PLCE), 91–127 (CHDW…EACQ), 132–179 (CDLT…KFCE), 180–217 (CDDR…DKCE), 220–270 (CDIT…DTCE), 271–311 (CDER…KKCE), 316–362 (CPLS…KTCE), 363–399 (CDDR…KLCQ), 404–449 (CNMT…EFCD), and 450–486 (CDDR…NACE). One copy of the I repeat lies at 51-95 (CRAPGQPPGSALCHDRGRCECGVCICHVTEPGTYFGPLCECHDWV). The tract at residues 51–494 (CRAPGQPPGS…CEIWLGTEYP (444 aa)) is cysteine-rich tandem repeats. The II repeat unit spans residues 96-142 (CETYDGKTCAGHGTCDCGKCKCDVGWSGEACQYPTKCDLTKKISNQM). The stretch at 143-184 (CKNSQDVICSNAGTCHCGRCKCDNSDGHGLIYGKFCECDDRE) is one III repeat. The IV repeat unit spans residues 185–230 (CIDDETEEICGGHGKCYCGNCYCEAGWHGDKCEFQCDITPWESKRR). Residues 231–275 (CTSPDGKVCSNRGTCVCGECSCHDVDPTGDWGDIHGDTCECDERD) form a V repeat. Residues 276–326 (CRAVYDRYSDDFCSGHGQCNCGRCDCRAGWYGKKCEHPKNCPLSAEESTRK) form a VI repeat. The VII repeat unit spans residues 327-367 (CQGSSDLPCSGRGRCECGRCTCYPPGDSRVYGKTCECDDRR). The stretch at 368-414 (CEDLDGVVCGGRGTCSCGRCVCEKGWFGKLCQHPRKCNMTEEQSRSL) is one VIII repeat. N-linked (GlcNAc...) asparagine glycosylation occurs at Asn405. Residues 415–454 (CESADGTLCSGKGSCHCGKCICSGEEWYISGEFCDCDDRD) form an IX repeat. Residues 455 to 494 (CDKHDGLICTGNGICSCGNCECWDGWNGNACEIWLGTEYP) form a X repeat.

It localises to the secreted. The polypeptide is Integrin beta-like protein 1 (Itgbl1) (Rattus norvegicus (Rat)).